The chain runs to 397 residues: CCA-adding enzyme (397 aa).

Glycine 26 and arginine 29 together coordinate ATP. CTP is bound by residues glycine 26 and arginine 29. Mg(2+) contacts are provided by aspartate 39 and aspartate 41. The ATP site is built by arginine 110, aspartate 153, arginine 156, arginine 159, and arginine 162. Residues arginine 110, aspartate 153, arginine 156, arginine 159, and arginine 162 each coordinate CTP.

It belongs to the tRNA nucleotidyltransferase/poly(A) polymerase family. Bacterial CCA-adding enzyme type 3 subfamily. Homodimer. It depends on Mg(2+) as a cofactor.

It catalyses the reaction a tRNA precursor + 2 CTP + ATP = a tRNA with a 3' CCA end + 3 diphosphate. The enzyme catalyses a tRNA with a 3' CCA end + 2 CTP + ATP = a tRNA with a 3' CCACCA end + 3 diphosphate. In terms of biological role, catalyzes the addition and repair of the essential 3'-terminal CCA sequence in tRNAs without using a nucleic acid template. Adds these three nucleotides in the order of C, C, and A to the tRNA nucleotide-73, using CTP and ATP as substrates and producing inorganic pyrophosphate. tRNA 3'-terminal CCA addition is required both for tRNA processing and repair. Also involved in tRNA surveillance by mediating tandem CCA addition to generate a CCACCA at the 3' terminus of unstable tRNAs. While stable tRNAs receive only 3'-terminal CCA, unstable tRNAs are marked with CCACCA and rapidly degraded. This chain is CCA-adding enzyme, found in Bacillus cereus (strain Q1).